Here is a 176-residue protein sequence, read N- to C-terminus: MSKVKKNDETLSEVLVDVNRVTKVVKGGRSFAFSAYVVVGDKAGRVGAGHGKAKEVNEARGKAKQAAKKRMMKVPLYQNRTIHHDVVGKSGAAKVILRRAKAGTGIIAGGSMRAIFDSLGVHDIVAKSIGSTNVYAMISATFDALNKLASPKSIAMRRDKKVNEISVKSADIQVNE.

The S5 DRBM domain maps to Leu11–Val74.

This sequence belongs to the universal ribosomal protein uS5 family. Part of the 30S ribosomal subunit. Contacts proteins S4 and S8.

Functionally, with S4 and S12 plays an important role in translational accuracy. Located at the back of the 30S subunit body where it stabilizes the conformation of the head with respect to the body. The polypeptide is Small ribosomal subunit protein uS5 (Rickettsia africae (strain ESF-5)).